A 43-amino-acid polypeptide reads, in one-letter code: Cytochrome b559 subunit beta (43 aa).

The helical transmembrane segment at 18–34 (WLAIHGLAIPTVFFLGG) threads the bilayer. A heme-binding site is contributed by His22.

This sequence belongs to the PsbE/PsbF family. Heterodimer of an alpha subunit and a beta subunit. PSII is composed of 1 copy each of membrane proteins PsbA, PsbB, PsbC, PsbD, PsbE, PsbF, PsbH, PsbI, PsbJ, PsbK, PsbL, PsbM, PsbT, PsbX, PsbY, PsbZ, Psb30/Ycf12, at least 3 peripheral proteins of the oxygen-evolving complex and a large number of cofactors. It forms dimeric complexes. Heme b is required as a cofactor.

The protein resides in the plastid. The protein localises to the chloroplast thylakoid membrane. This b-type cytochrome is tightly associated with the reaction center of photosystem II (PSII). PSII is a light-driven water:plastoquinone oxidoreductase that uses light energy to abstract electrons from H(2)O, generating O(2) and a proton gradient subsequently used for ATP formation. It consists of a core antenna complex that captures photons, and an electron transfer chain that converts photonic excitation into a charge separation. The polypeptide is Cytochrome b559 subunit beta (Phaeodactylum tricornutum (strain CCAP 1055/1)).